The following is a 406-amino-acid chain: telomere-associated protein 1 (406 aa).

The span at 20 to 40 (EHHNGSHDNDDKDKEDKEKQN) shows a compositional bias: basic and acidic residues. Residues 20–46 (EHHNGSHDNDDKDKEDKEKQNTEAVAA) are disordered. The HTH myb-type domain maps to 147-206 (TTRRVRLRWTQEETADLMEGCKVHGVGNWKKILTDPRFRFNNRTAVDLKDRFRTCFPEDY). A DNA-binding region (H-T-H motif) is located at residues 175-202 (WKKILTDPRFRFNNRTAVDLKDRFRTCF). The Myb-like domain occupies 234–288 (VNRKERRVFTPEEDERLLNGFMKHGPSWSNIQRDNELGLFERRSTDLRDRFRNAF). The disordered stretch occupies residues 368–389 (TQELQPQAHSRKQQGGDGLKEE).

It is found in the nucleus. It localises to the chromosome. The protein resides in the telomere. In terms of biological role, telomere-binding protein that mediates telomere clustering by promoting formation of head-to-head dimers of DNA molecules through the telomeric tracts. Binds specifically 5'-TTAGTCAGGG-3' repeats in subtelomeric regions. The sequence is that of telomere-associated protein 1 from Yarrowia lipolytica (strain CLIB 122 / E 150) (Yeast).